The sequence spans 180 residues: NAD(P)H-quinone oxidoreductase subunit I, chloroplastic (180 aa).

2 consecutive 4Fe-4S ferredoxin-type domains span residues 55 to 84 (GRIH…VDWR) and 95 to 124 (LNYS…MTEE). The [4Fe-4S] cluster site is built by Cys64, Cys67, Cys70, Cys74, Cys104, Cys107, Cys110, and Cys114.

It belongs to the complex I 23 kDa subunit family. As to quaternary structure, NDH is composed of at least 16 different subunits, 5 of which are encoded in the nucleus. The cofactor is [4Fe-4S] cluster.

The protein resides in the plastid. It is found in the chloroplast thylakoid membrane. The enzyme catalyses a plastoquinone + NADH + (n+1) H(+)(in) = a plastoquinol + NAD(+) + n H(+)(out). It catalyses the reaction a plastoquinone + NADPH + (n+1) H(+)(in) = a plastoquinol + NADP(+) + n H(+)(out). In terms of biological role, NDH shuttles electrons from NAD(P)H:plastoquinone, via FMN and iron-sulfur (Fe-S) centers, to quinones in the photosynthetic chain and possibly in a chloroplast respiratory chain. The immediate electron acceptor for the enzyme in this species is believed to be plastoquinone. Couples the redox reaction to proton translocation, and thus conserves the redox energy in a proton gradient. This is NAD(P)H-quinone oxidoreductase subunit I, chloroplastic from Hordeum vulgare (Barley).